The following is a 359-amino-acid chain: Large ribosomal subunit protein bL27m (359 aa).

A mitochondrion-targeting transit peptide spans 1-24 (MSFWKVATLWQMPLRPSILVQVRT). The segment at 29–48 (AAGSRTSMKDSAGRRLGPKK) is disordered. A compositionally biased stretch (basic and acidic residues) spans 35–48 (SMKDSAGRRLGPKK).

The protein belongs to the bacterial ribosomal protein bL27 family.

The protein resides in the mitochondrion. Functionally, component of the large subunit of mitochondrial ribosome. The sequence is that of Large ribosomal subunit protein bL27m (MRPL2) from Eremothecium gossypii (strain ATCC 10895 / CBS 109.51 / FGSC 9923 / NRRL Y-1056) (Yeast).